Consider the following 193-residue polypeptide: Cysteine and glycine-rich protein 1 (193 aa).

An LIM zinc-binding 1 domain is found at 10 to 61 (CGVCQKTVYFAEEVQCEGNSFHKSCFLCMVCKKNLDSTTVAVHGEEIYCKSC). The Nuclear localization signal signature appears at 64–69 (KKYGPK). S81 is subject to Phosphoserine. K84 carries the post-translational modification N6-acetyllysine. Residue K91 forms a Glycyl lysine isopeptide (Lys-Gly) (interchain with G-Cter in SUMO2) linkage. N6-acetyllysine is present on residues K112, K131, K137, and K161. Residues 119–170 (CPRCSQAVYAAEKVIGAGKSWHKACFRCAKCGKGLESTTLADKDGEIYCKGC) form the LIM zinc-binding 2 domain. A Phosphoserine modification is found at S192.

As to quaternary structure, interacts with ASCC1; ASCC2 and TRIP4.

The protein resides in the nucleus. Functionally, could play a role in neuronal development. In Pongo abelii (Sumatran orangutan), this protein is Cysteine and glycine-rich protein 1 (CSRP1).